We begin with the raw amino-acid sequence, 384 residues long: Terpene cyclase ascI (384 aa).

A signal peptide spans 1–25; that stretch reads MPQLAGKLILAGLIPLGAWVLHGFA. Residues 82 to 102 traverse the membrane as a helical segment; sequence LSLHAFMFAGQGVPLLVLNML. N-linked (GlcNAc...) asparagine glycosylation is present at asparagine 109. The next 4 helical transmembrane spans lie at 119 to 139, 164 to 184, 194 to 214, and 235 to 255; these read VFGI…YLFL, AVGF…SLPH, VLSV…AYFA, and GAVY…TFAI. N-linked (GlcNAc...) asparagine glycosylation is present at asparagine 258. 2 consecutive transmembrane segments (helical) span residues 291–311 and 330–350; these read WFLQ…AIGI and IALR…ALSL. The N-linked (GlcNAc...) asparagine glycan is linked to asparagine 372.

It belongs to the membrane-bound ascI terpene cyclase family.

It localises to the membrane. The catalysed reaction is 16-hydroxy-ilicicolin A epoxide = ascofuranol. The protein operates within secondary metabolite biosynthesis; terpenoid biosynthesis. Functionally, epoxide hydrolase; part of the asc-2 gene cluster that mediates the biosynthesis of ascofuranone, a strong inhibitor of cyanide-insensitive alternative oxidases and a promising drug candidate against African trypanosomiasis. The first step in the pathway is performed by the non-reducing polyketide synthase ascC that produces orsellinic acid by condensing acetyl-CoA with 3 malonyl-CoA units. Orsellinic acid is then prenylated by the prenyltransferase ascA to yield ilicicolinic acid B. Ilicicolinic acid B is further reduced to ilicicolin B by the reductase ascB. The halogenase ascD then chlorinates ilicicolin B to produce ilicicolin A which is converted to ilicicolin A epoxide by the cytochrome P450 monooxygenase ascE that catalyzes stereoselective epoxidation of the terminal double bond of the prenyl group. Ilicicolin A epoxide is the last common precursor for the biosynthesis of ascofuranone and ascochlorin. The terpene cyclase ascF produces a monocyclic terpene, and the cyclization reaction is proposed to be initiated by protonation of the terminal epoxide of ilicicolin A epoxide to generate a monocyclic tertiarycation, which is followed by a series of hydride and methyl shifts with abstraction of proton, leading to the formation of the (14S,15R,19R)-trimethylcyclohexanone ring structure of ilicicolin C, which is finally reduced to ascochlorin by the dehydrogenase ascG. On the other hand, ilicicolin A epoxide is hydroxylated by the cytochrome P450 monooxygenase ascH, and the resultant product is cyclized by the terpene cyclase ascI to ascofuranol via protonation-initiated epoxide ring opening, which facilitates the 6-endo-tet cyclization to form the tetrahy-drofuran ring. Finally, ascofuranol is oxidized into ascofuranone by ascJ. The chain is Terpene cyclase ascI from Acremonium egyptiacum (Oospora egyptiaca).